Here is a 72-residue protein sequence, read N- to C-terminus: Cell division protein ZapB (72 aa).

Residues 1–72 adopt a coiled-coil conformation; that stretch reads MSSEILDQLE…RSLLGQIDNV (72 aa).

This sequence belongs to the ZapB family. In terms of assembly, homodimer. The ends of the coiled-coil dimer bind to each other, forming polymers. Interacts with FtsZ.

The protein resides in the cytoplasm. Functionally, non-essential, abundant cell division factor that is required for proper Z-ring formation. It is recruited early to the divisome by direct interaction with FtsZ, stimulating Z-ring assembly and thereby promoting cell division earlier in the cell cycle. Its recruitment to the Z-ring requires functional FtsA or ZipA. This Actinobacillus succinogenes (strain ATCC 55618 / DSM 22257 / CCUG 43843 / 130Z) protein is Cell division protein ZapB.